Consider the following 897-residue polypeptide: Serine/threonine-protein kinase ATG1 (897 aa).

The region spanning 24-325 is the Protein kinase domain; the sequence is YTAEKEIGKG…FEEFFANKVV (302 aa). ATP is bound by residues 30-38 and K54; that span reads IGKGSFATV. The residue at position 34 (S34) is a Phosphoserine. T129 bears the Phosphothreonine mark. The active-site Proton acceptor is the D172. The residue at position 226 (T226) is a Phosphothreonine; by autocatalysis. 3 positions are modified to phosphoserine: S304, S365, and S390. Residues 429–432 carry the LIR motif; sequence YVVV. Residues 490 to 509 form a disordered region; it reads LLRATSSSSGGSDGSRRPSL. S508 and S515 each carry phosphoserine; by PKA. Phosphoserine is present on residues S533, S551, and S552. Position 590 is a phosphothreonine (T590). S621, S635, S638, S647, S677, S680, S683, S769, and S783 each carry phosphoserine. Residues 880–886 are required for Cvt trafficking; the sequence is DSIANRL.

Belongs to the protein kinase superfamily. Ser/Thr protein kinase family. APG1/unc-51/ULK1 subfamily. Homodimer. Dimerization requires the presence of ATG13. Forms a ternary complex with ATG13 and ATG17. Also interacts with ATG11. In terms of processing, autophosphorylated at Thr-226 and Ser-390. The phosphorylation state may play a role in the induction of protein degradation upon starvation. Phosphorylation at Thr-226 within the activation loop is required for protein kinase activity whereas phosphorylation at Ser-34 leads to inhibition of kinase activity. Phosphorylation of Ser-508 and Ser-515 by PKA is required to induce autophagy but not for kinase activity.

The protein localises to the cytoplasm. Its subcellular location is the preautophagosomal structure membrane. It catalyses the reaction L-seryl-[protein] + ATP = O-phospho-L-seryl-[protein] + ADP + H(+). The catalysed reaction is L-threonyl-[protein] + ATP = O-phospho-L-threonyl-[protein] + ADP + H(+). Its activity is regulated as follows. Activated by hypophosphorylated form of ATG13 (present in nitrogen starvation conditions). Also activated by autophopsphorylation of Thr-226 and inhibited by phosphorylation of Ser-34. Its function is as follows. Serine/threonine protein kinase involved in the cytoplasm to vacuole transport (Cvt) and found to be essential in autophagy, where it is required for the formation of autophagosomes. Involved in the clearance of protein aggregates which cannot be efficiently cleared by the proteasome. Required for selective autophagic degradation of the nucleus (nucleophagy) as well as for mitophagy which contributes to regulate mitochondrial quantity and quality by eliminating the mitochondria to a basal level to fulfill cellular energy requirements and preventing excess ROS production. Also involved in endoplasmic reticulum-specific autophagic process, in selective removal of ER-associated degradation (ERAD) substrates. Plays a key role in ATG9 and ATG23 cycling through the pre-autophagosomal structure and is necessary to promote ATG18 binding to ATG9 through phosphorylation of ATG9. Catalyzes phosphorylation of ATG4, decreasing the interaction between ATG4 and ATG8 and impairing deconjugation of PE-conjugated forms of ATG8. Finally, ATG1 is also required for the maintenance of cell viability under starvation and for glycogen storage during stationary phase. Plays a role in genome stability through suppression of abnormal mitosis under starvation, and in regulation of filamentous growth. The chain is Serine/threonine-protein kinase ATG1 from Saccharomyces cerevisiae (strain YJM789) (Baker's yeast).